Consider the following 49-residue polypeptide: Large ribosomal subunit protein bL33 (49 aa).

It belongs to the bacterial ribosomal protein bL33 family.

The sequence is that of Large ribosomal subunit protein bL33 from Clostridium beijerinckii (strain ATCC 51743 / NCIMB 8052) (Clostridium acetobutylicum).